The following is a 119-amino-acid chain: UPF0212 protein Mlab_0931 (119 aa).

It belongs to the UPF0212 family.

In Methanocorpusculum labreanum (strain ATCC 43576 / DSM 4855 / Z), this protein is UPF0212 protein Mlab_0931.